A 183-amino-acid chain; its full sequence is MTIKREMRNDKRAVPKAPINENISAREVRLIGADGEQVGIVSIDEALRIADEAKLDLVEISADAVPPVCKVMDYGKHLFEKKKQANEAKKNQKQIQIKEIKFRPGTEDGDYQVKLRNLVRFLTDGDKAKISLRFRGREMAHQELGMELLKRVEADLAEYGTVEQHPKMEGRQLMMVIAPKKKK.

This sequence belongs to the IF-3 family. As to quaternary structure, monomer.

The protein localises to the cytoplasm. IF-3 binds to the 30S ribosomal subunit and shifts the equilibrium between 70S ribosomes and their 50S and 30S subunits in favor of the free subunits, thus enhancing the availability of 30S subunits on which protein synthesis initiation begins. This is Translation initiation factor IF-3 from Pseudomonas putida (strain ATCC 700007 / DSM 6899 / JCM 31910 / BCRC 17059 / LMG 24140 / F1).